A 1443-amino-acid polypeptide reads, in one-letter code: Lysophospholipase NTE1 (1443 aa).

Residues 1–59 (MEEELAIEDLPRLTGTVSLNNGLLHSIYNETTVFKILRWSLVEIPKYILKLMSKNLEIN) are Lumenal-facing. A helical membrane pass occupies residues 60-80 (LNVSSILIITLLIAAGILVIV). Residues 81-1443 (RYKFLTGYSE…RIKMYRRNTM (1363 aa)) are Cytoplasmic-facing. The segment covering 103-118 (ALGQQSTNYPKSTSSG) has biased composition (polar residues). 2 disordered regions span residues 103 to 122 (ALGQ…LFVE) and 199 to 251 (KYDE…GKMH). Over residues 210-235 (EGEEADEDDEEEEKEVGDDGDDEMDV) the composition is skewed to acidic residues. A nucleoside 3',5'-cyclic phosphate-binding positions include 619 to 750 (LYKR…LKSL) and 746 to 871 (KLKS…VASK). A PNPLA domain is found at 1136–1300 (LVLGGGGSRG…LDNLPVMEMK (165 aa)). The GXGXXG motif lies at 1140–1145 (GGGSRG). The GXSXG motif lies at 1167–1171 (GTSIG). The Nucleophile role is filled by Ser1169. Asp1287 serves as the catalytic Proton acceptor. The DGA/G signature appears at 1287 to 1289 (DGG).

Belongs to the NTE family.

The protein resides in the endoplasmic reticulum membrane. It carries out the reaction a 1-acyl-sn-glycero-3-phosphocholine + H2O = sn-glycerol 3-phosphocholine + a fatty acid + H(+). With respect to regulation, inhibited by organophosphorus esters. Its function is as follows. Intracellular phospholipase B that catalyzes the double deacylation of phosphatidylcholine (PC) to glycerophosphocholine (GroPCho). Plays an important role in membrane lipid homeostasis. Responsible for the rapid PC turnover in response to inositol, elevated temperatures, or when choline is present in the growth medium. This chain is Lysophospholipase NTE1 (NTE1), found in Lodderomyces elongisporus (strain ATCC 11503 / CBS 2605 / JCM 1781 / NBRC 1676 / NRRL YB-4239) (Yeast).